Here is a 278-residue protein sequence, read N- to C-terminus: Protein D7 (278 aa).

CHHC U11-48K-type zinc fingers lie at residues Leu6–Asn33 and Leu40–Val67. Zn(2+)-binding residues include Cys9, His15, His25, Cys29, Cys43, His49, His59, and Cys63. Positions Gln149–Glu164 are enriched in polar residues. 2 disordered regions span residues Gln149–Asn230 and Pro249–Lys278. Residues Arg165–Pro175 show a composition bias toward basic and acidic residues. Residues Ala188–Gly200 are compositionally biased toward polar residues. The segment covering Ser214 to Pro225 has biased composition (basic and acidic residues).

Belongs to the UPF0224 (FAM112) family.

The protein localises to the cytoplasm. In terms of biological role, involved in oocyte maturation. It is possible that D7 is required at a certain point in the maturation process and that maturation cannot proceed beyond this point unless a threshold amount of D7 protein is provided. The chain is Protein D7 (d7) from Xenopus laevis (African clawed frog).